Here is a 394-residue protein sequence, read N- to C-terminus: DNA repair protein brc-2 (394 aa).

A compositionally biased stretch (basic and acidic residues) spans 1–12 (MGDSSKKVKDSF). 2 disordered regions span residues 1 to 30 (MGDS…VPIS) and 56 to 136 (MLNS…EKKK). The segment at 1–60 (MGDSSKKVKDSFDTISEPDSFDEPKGVPISMEPVFSTAAGIRIDVKQESIDKSKKMLNSD) is interaction with rad-51. Residues 28 to 62 (PISMEPVFSTAAGIRIDVKQESIDKSKKMLNSDLK) form a BRCA2 repeat-like region region. The segment covering 56–73 (MLNSDLKSKSSSKGGFSS) has biased composition (low complexity). The tract at residues 60–89 (DLKSKSSSKGGFSSPLVRKNNGSSAFVSPF) is interaction with rad-51-DNA complexes. Residues 124–134 (KKSKKHSKKEK) show a composition bias toward basic residues. Residues 371 to 389 (WKDFGSYLKHKEDKKKRRS) form a required for ssDNA binding region.

In terms of assembly, interacts (via N-terminus) with rad-51; regulates rad-51 recruitment to sites of DNA double strand breaks. As to expression, expressed in the germline, with highest expression in cells undergoing oogenesis.

It is found in the nucleus. Its subcellular location is the chromosome. Its function is as follows. Required for the homologous recombination repair of DNA double strand breaks, thereby playing a role in chromosome integrity. Acts by targeting rad-51 to sites of DNA damage and stabilizing rad-51-DNA filaments by blocking ATP hydrolysis catalyzed by rad-51. Promotes rad-51 mediated displacement-loop (D-loop) formation during strand invasion between the invading single-stranded DNA (ssDNA) and the homologous duplex DNA. Also functions independently of rad-51 in DNA double-strand break (DSB) repair by promoting DNA single-strand annealing (SSA) when the homologous recombination (HR) and non-homologous end joining (NHEJ) pathways are compromised. Binds selectively to single-stranded (ssDNA) via its C-terminus. Involved in telomere maintenance and replicative senescence. This chain is DNA repair protein brc-2, found in Caenorhabditis elegans.